The primary structure comprises 446 residues: MISARQLAFLILRDINRRDSYTDVAIDRALQKHPLSPPDRRFCTELVYGVVRRQRTLDCLIEQLGDRPIGKQPPDLRRIVQLGLYQLRYLDQVPASAAVNTGVDLAKANGLKGLSKVVNGMLRRYQRAEEQGKNILDQEKISLGEQYSFPDWLMELFEQTWGKAETESLCAYFNQNPSLDLRINPLKTSRVEVAQSLAELNLTTTAMAGLPQGLRLGGKTGAITQLPGFAEGWWTVQDASAQWVAQILNPQPEETIFDVCAAPGGKTTHIAELMGDQGQIYAGDRHGWRLQKLAVTQQRLGLTSIKIWEGDLTQPGVKPPVELVDRALLDVPCSGLGTLHRNPDLRWRQTPATIATLLPLQQALLKAIAPLVKSGGTLVYSTCTLNPAENEAQIERFLQDHEDWRSEPFEWTSPQGQTNSVTSGMLTILPHHHHQDGFFIANLKKA.

S-adenosyl-L-methionine-binding positions include 260–266 (CAAPGGK), Asp284, Asp311, and Asp330. Cys383 (nucleophile) is an active-site residue.

The protein belongs to the class I-like SAM-binding methyltransferase superfamily. RsmB/NOP family.

Its subcellular location is the cytoplasm. The catalysed reaction is cytidine(967) in 16S rRNA + S-adenosyl-L-methionine = 5-methylcytidine(967) in 16S rRNA + S-adenosyl-L-homocysteine + H(+). Functionally, specifically methylates the cytosine at position 967 (m5C967) of 16S rRNA. This chain is Probable ribosomal RNA small subunit methyltransferase B, found in Synechocystis sp. (strain ATCC 27184 / PCC 6803 / Kazusa).